We begin with the raw amino-acid sequence, 218 residues long: Molybdenum cofactor guanylyltransferase (218 aa).

GTP contacts are provided by residues 16–18, Lys28, Asn56, Asp74, and Asp109; that span reads LAG. Asp109 contacts Mg(2+).

Belongs to the MobA family. In terms of assembly, monomer. Mg(2+) is required as a cofactor.

The protein localises to the cytoplasm. The catalysed reaction is Mo-molybdopterin + GTP + H(+) = Mo-molybdopterin guanine dinucleotide + diphosphate. Its function is as follows. Transfers a GMP moiety from GTP to Mo-molybdopterin (Mo-MPT) cofactor (Moco or molybdenum cofactor) to form Mo-molybdopterin guanine dinucleotide (Mo-MGD) cofactor. The sequence is that of Molybdenum cofactor guanylyltransferase from Rhizobium meliloti (strain 1021) (Ensifer meliloti).